The primary structure comprises 285 residues: Acetyl-coenzyme A carboxylase carboxyl transferase subunit beta 2 (285 aa).

The segment at 1-20 (MAIRSLFSGNRKKKEDGQEK) is disordered. One can recognise a CoA carboxyltransferase N-terminal domain in the interval 26 to 285 (LMTKCPECRH…MHTKGGVQHV (260 aa)). Zn(2+) contacts are provided by C30, C33, C49, and C52. Residues 30 to 52 (CPECRHIQLTKELEKNHKVCTKC) form a C4-type zinc finger.

It belongs to the AccD/PCCB family. Acetyl-CoA carboxylase is a heterohexamer composed of biotin carboxyl carrier protein (AccB), biotin carboxylase (AccC) and two subunits each of ACCase subunit alpha (AccA) and ACCase subunit beta (AccD). It depends on Zn(2+) as a cofactor.

Its subcellular location is the cytoplasm. The enzyme catalyses N(6)-carboxybiotinyl-L-lysyl-[protein] + acetyl-CoA = N(6)-biotinyl-L-lysyl-[protein] + malonyl-CoA. Its pathway is lipid metabolism; malonyl-CoA biosynthesis; malonyl-CoA from acetyl-CoA: step 1/1. Its function is as follows. Component of the acetyl coenzyme A carboxylase (ACC) complex. Biotin carboxylase (BC) catalyzes the carboxylation of biotin on its carrier protein (BCCP) and then the CO(2) group is transferred by the transcarboxylase to acetyl-CoA to form malonyl-CoA. The protein is Acetyl-coenzyme A carboxylase carboxyl transferase subunit beta 2 of Lysinibacillus sphaericus (strain C3-41).